The primary structure comprises 587 residues: Phosphatidate phosphatase APP1 (587 aa).

Disordered regions lie at residues 1–28 and 150–178; these read MNSQ…RMGK and PPHL…SENR. 2 stretches are compositionally biased toward low complexity: residues 9 to 22 and 163 to 174; these read SSSS…PTSG and SQSSIESSLSSK. The DXDXT motif signature appears at 281–285; it reads DIDDT. The disordered stretch occupies residues 452 to 521; the sequence is QQRPMQMTKS…NRQLPNLDAN (70 aa). Positions 467–483 are interaction with SH3 domain of ABP1; sequence RRPPPPPIPSTQKPSLT.

In terms of assembly, monomer. Interacts with ABP1. It depends on Mg(2+) as a cofactor. Post-translationally, N-glycosylated.

The protein resides in the cytoplasm. It is found in the cytoskeleton. Its subcellular location is the actin patch. The enzyme catalyses a 1,2-diacyl-sn-glycero-3-phosphate + H2O = a 1,2-diacyl-sn-glycerol + phosphate. The catalysed reaction is 1,2-di-(9Z-octadecenoyl)-sn-glycero-3-phosphate + H2O = 1,2-di-(9Z-octadecenoyl)-sn-glycerol + phosphate. Its activity is regulated as follows. Inhibited by N-ethylmaleimide. Its function is as follows. Mg(2+)-dependent phosphatidate (PA) phosphatase which catalyzes the dephosphorylation of PA to yield diacylglycerol. May play a role in vesicular trafficking through its PAP activity at cortical actin patches. Can also utilize diacylglycerol pyrophosphate and lyso-PA as substrates with specificity constants 4- and 7-fold lower, respectively, when compared with PA. In Saccharomyces cerevisiae (strain ATCC 204508 / S288c) (Baker's yeast), this protein is Phosphatidate phosphatase APP1 (APP1).